The sequence spans 238 residues: MKIDVLTLFPEMFHALDHSIVGRAKTLGQVEMSFLNFRDFSTNKHHKVDDYPYGGGAGMLLTPQPIFDAFHSLEAKSPRVILTTPTGKPFNQRMAEVWAKEEHLVFLCGHYEGFDQRIHDELATDEVSIGDFVLTGGELATMVMIDATVRLIPDVLNAQASHEDDSFSTGLLEYPHYTRPADFRGLTVPDVLLSGNHARIEAWRREQSLERTYRRRPDLLEHVELTDVDKKFLQSLRD.

Residues G109 and 129 to 134 (IGDFVL) each bind S-adenosyl-L-methionine.

This sequence belongs to the RNA methyltransferase TrmD family. As to quaternary structure, homodimer.

It is found in the cytoplasm. It carries out the reaction guanosine(37) in tRNA + S-adenosyl-L-methionine = N(1)-methylguanosine(37) in tRNA + S-adenosyl-L-homocysteine + H(+). In terms of biological role, specifically methylates guanosine-37 in various tRNAs. The protein is tRNA (guanine-N(1)-)-methyltransferase of Exiguobacterium sp. (strain ATCC BAA-1283 / AT1b).